A 680-amino-acid polypeptide reads, in one-letter code: UvrABC system protein C (680 aa).

One can recognise a GIY-YIG domain in the interval 66 to 144; it reads NSPGVYRMFN…IKRLRPRFNV (79 aa). A UVR domain is found at 254–289; it reads QKVKSHMAEAMNQAAEDLDFERAAIYRDRLAALSHV.

It belongs to the UvrC family. In terms of assembly, interacts with UvrB in an incision complex.

The protein localises to the cytoplasm. Functionally, the UvrABC repair system catalyzes the recognition and processing of DNA lesions. UvrC both incises the 5' and 3' sides of the lesion. The N-terminal half is responsible for the 3' incision and the C-terminal half is responsible for the 5' incision. The sequence is that of UvrABC system protein C from Rhizobium johnstonii (strain DSM 114642 / LMG 32736 / 3841) (Rhizobium leguminosarum bv. viciae).